The sequence spans 395 residues: Flap endonuclease 1 (395 aa).

Residues methionine 1–lysine 104 are N-domain. Aspartate 34 contacts Mg(2+). Residues arginine 47 and arginine 70 each coordinate DNA. The Mg(2+) site is built by aspartate 86, glutamate 158, glutamate 160, aspartate 179, and aspartate 181. The I-domain stretch occupies residues aspartate 122–histidine 253. Residue glutamate 158 coordinates DNA. Positions 231 and 233 each coordinate DNA. Position 233 (aspartate 233) interacts with Mg(2+). The segment at glutamine 341–phenylalanine 349 is interaction with PCNA. A compositionally biased stretch (basic and acidic residues) spans glutamine 357–serine 389. Residues glutamine 357 to valine 395 form a disordered region.

Belongs to the XPG/RAD2 endonuclease family. FEN1 subfamily. Interacts with PCNA. Three molecules of FEN1 bind to one PCNA trimer with each molecule binding to one PCNA monomer. PCNA stimulates the nuclease activity without altering cleavage specificity. It depends on Mg(2+) as a cofactor. Post-translationally, phosphorylated. Phosphorylation upon DNA damage induces relocalization to the nuclear plasma.

It is found in the nucleus. It localises to the nucleolus. The protein resides in the nucleoplasm. The protein localises to the mitochondrion. Functionally, structure-specific nuclease with 5'-flap endonuclease and 5'-3' exonuclease activities involved in DNA replication and repair. During DNA replication, cleaves the 5'-overhanging flap structure that is generated by displacement synthesis when DNA polymerase encounters the 5'-end of a downstream Okazaki fragment. It enters the flap from the 5'-end and then tracks to cleave the flap base, leaving a nick for ligation. Also involved in the long patch base excision repair (LP-BER) pathway, by cleaving within the apurinic/apyrimidinic (AP) site-terminated flap. Acts as a genome stabilization factor that prevents flaps from equilibrating into structures that lead to duplications and deletions. Also possesses 5'-3' exonuclease activity on nicked or gapped double-stranded DNA, and exhibits RNase H activity. Also involved in replication and repair of rDNA and in repairing mitochondrial DNA. The polypeptide is Flap endonuclease 1 (Ajellomyces dermatitidis (strain ER-3 / ATCC MYA-2586) (Blastomyces dermatitidis)).